The primary structure comprises 429 residues: Enolase (429 aa).

Gln-162 is a binding site for (2R)-2-phosphoglycerate. The active-site Proton donor is the Glu-204. Residues Asp-241, Glu-283, and Asp-310 each contribute to the Mg(2+) site. The (2R)-2-phosphoglycerate site is built by Lys-335, Arg-364, Ser-365, and Lys-386. The Proton acceptor role is filled by Lys-335.

The protein belongs to the enolase family. Mg(2+) is required as a cofactor.

It is found in the cytoplasm. It localises to the secreted. Its subcellular location is the cell surface. It carries out the reaction (2R)-2-phosphoglycerate = phosphoenolpyruvate + H2O. The protein operates within carbohydrate degradation; glycolysis; pyruvate from D-glyceraldehyde 3-phosphate: step 4/5. Catalyzes the reversible conversion of 2-phosphoglycerate (2-PG) into phosphoenolpyruvate (PEP). It is essential for the degradation of carbohydrates via glycolysis. In Mycolicibacterium vanbaalenii (strain DSM 7251 / JCM 13017 / BCRC 16820 / KCTC 9966 / NRRL B-24157 / PYR-1) (Mycobacterium vanbaalenii), this protein is Enolase.